Here is a 69-residue protein sequence, read N- to C-terminus: uncharacterized protein (69 aa).

The helical transmembrane segment at 13–35 threads the bilayer; sequence IRSINPTLLNFINYFLLIVPQFI.

It localises to the membrane. This is an uncharacterized protein from Saccharomyces cerevisiae (strain ATCC 204508 / S288c) (Baker's yeast).